A 342-amino-acid polypeptide reads, in one-letter code: 29 kDa ribonucleoprotein, chloroplastic (342 aa).

The transit peptide at 1 to 65 directs the protein to the chloroplast; it reads MSASASSLSA…PAEYPSRFVR (65 aa). An RRM 1 domain is found at 99 to 177; that stretch reads LKLFVGNLSF…RPLRVNAGPP (79 aa). A phosphoserine mark is found at S107 and S204. The segment at 167 to 255 is disordered; sequence GRPLRVNAGP…GSGSGSGSGS (89 aa). Residues 178-256 are linker (Gly-rich); it reads PPKREESFSR…SGSGSGSGSG (79 aa). Composition is skewed to gly residues over residues 190-237 and 245-255; these read RSGG…GYGG and SGSGSGSGSGS. The RRM 2 domain occupies 257–335; sequence NRLYVGNLSW…RQIRVSEAEA (79 aa).

The protein resides in the plastid. It is found in the chloroplast. In terms of biological role, stabilizes specific chloroplast mRNAs. Required for normal chloroplast development under cold stress conditions by stabilizing transcripts of numerous mRNAs under these conditions. The protein is 29 kDa ribonucleoprotein, chloroplastic of Arabidopsis thaliana (Mouse-ear cress).